Consider the following 534-residue polypeptide: Dual specificity calcium/calmodulin-dependent 3',5'-cyclic nucleotide phosphodiesterase 1B (534 aa).

Positions 1 to 21 are disordered; the sequence is MELSPRSPPEMLESDCPSPLE. Phosphoserine is present on residues S7 and S14. Calmodulin-binding regions lie at residues 27–47 and 116–139; these read SKKM…QLEN and EKPK…MFRR. Residues 144 to 501 enclose the PDEase domain; it reads VGPTYSTAVL…QKWKERAASG (358 aa). The active-site Proton donor is the H221. The Zn(2+) site is built by H225, H261, D262, and D368. D262 contributes to the Mg(2+) binding site. Disordered regions lie at residues 442 to 473 and 494 to 534; these read VQPT…GDPN and WKER…GNLD. Residues 453–462 are compositionally biased toward polar residues; it reads KNQPSFQWRQ. S464 and S512 each carry phosphoserine.

Belongs to the cyclic nucleotide phosphodiesterase family. PDE1 subfamily. In terms of assembly, homodimer. The cofactor is Zn(2+). Requires Mg(2+) as cofactor. As to expression, expressed in central nervous system regions. Most abundant in basal ganglia. Also found in kidney papilla and adrenal medulla.

It is found in the cytoplasm. Its subcellular location is the cytosol. It carries out the reaction a nucleoside 3',5'-cyclic phosphate + H2O = a nucleoside 5'-phosphate + H(+). It catalyses the reaction 3',5'-cyclic GMP + H2O = GMP + H(+). The catalysed reaction is 3',5'-cyclic AMP + H2O = AMP + H(+). Type I PDE are activated by the binding of calmodulin in the presence of Ca(2+). Its function is as follows. Cyclic nucleotide phosphodiesterase with a dual specificity for the second messengers cAMP and cGMP, which are key regulators of many important physiological processes. Has a preference for cGMP as a substrate. The sequence is that of Dual specificity calcium/calmodulin-dependent 3',5'-cyclic nucleotide phosphodiesterase 1B from Bos taurus (Bovine).